The following is a 448-amino-acid chain: Trigger factor (448 aa).

Residues 172–257 (GDRVTVDFVG…MKKVEWPHLP (86 aa)) enclose the PPIase FKBP-type domain.

Belongs to the FKBP-type PPIase family. Tig subfamily.

It is found in the cytoplasm. The catalysed reaction is [protein]-peptidylproline (omega=180) = [protein]-peptidylproline (omega=0). Its function is as follows. Involved in protein export. Acts as a chaperone by maintaining the newly synthesized protein in an open conformation. Functions as a peptidyl-prolyl cis-trans isomerase. The protein is Trigger factor of Burkholderia multivorans (strain ATCC 17616 / 249).